Reading from the N-terminus, the 439-residue chain is Protein disulfide-isomerase A6 (439 aa).

The N-terminal stretch at 1–19 (MARLGFGLVSCTFFLAASG) is a signal peptide. 2 consecutive Thioredoxin domains span residues 20–133 (LYSS…ALRQ) and 151–287 (QGRG…EDVA). Residues cysteine 55 and cysteine 58 each act as nucleophile in the active site. A disulfide bridge connects residues cysteine 55 and cysteine 58. 3 positions are modified to phosphoserine: serine 129, serine 156, and serine 158. Residues 141-160 (GRSGGYSSGKQGRGDSSSKK) form a disordered region. Residues cysteine 190 and cysteine 193 each act as nucleophile in the active site. Cysteine 190 and cysteine 193 are oxidised to a cystine. A disordered region spans residues 400–425 (GSFPAITAREPWDGRDGELPVEDDID). Serine 427 bears the Phosphoserine mark. The Prevents secretion from ER signature appears at 436 to 439 (KDEL).

The protein belongs to the protein disulfide isomerase family. As to quaternary structure, part of a large chaperone multiprotein complex comprising DNAJB11, HSP90B1, HSPA5, HYOU, PDIA2, PDIA4, PDIA6, PPIB, SDF2L1, UGGT1 and very small amounts of ERP29, but not, or at very low levels, CALR nor CANX. Interacts with MICA on the surface of tumor cells, leading to MICA disulfide bond reduction which is required for its release from tumor cells. Interacts with ITGB3 following platelet stimulation. Interacts with ERN1; the interaction is direct. Interacts with EIF2AK3. Expressed most abundantly in lung and kidney, followed by heart, liver and brain.

The protein resides in the endoplasmic reticulum lumen. It localises to the cell membrane. The protein localises to the melanosome. It carries out the reaction Catalyzes the rearrangement of -S-S- bonds in proteins.. May function as a chaperone that inhibits aggregation of misfolded proteins. Negatively regulates the unfolded protein response (UPR) through binding to UPR sensors such as ERN1, which in turn inactivates ERN1 signaling. May also regulate the UPR via the EIF2AK3 UPR sensor. Plays a role in platelet aggregation and activation by agonists such as convulxin, collagen and thrombin. The polypeptide is Protein disulfide-isomerase A6 (PDIA6) (Mesocricetus auratus (Golden hamster)).